The following is a 504-amino-acid chain: Protein DETOXIFICATION 38 (504 aa).

The next 12 helical transmembrane spans lie at 56 to 76 (LLLR…GMGI), 90 to 110 (LAAA…MLGM), 139 to 159 (IVLA…YPIL), 170 to 190 (YMGS…AVYF), 208 to 228 (ISAA…YAMG), 234 to 254 (IAYV…FYVI), 273 to 295 (GLWS…LWYT), 316 to 336 (SICM…NAAV), 356 to 376 (TWTA…VVIA), 401 to 421 (FLAV…VAVG), 433 to 453 (IGCY…TFNF), and 457 to 477 (GIWT…LYVT).

This sequence belongs to the multi antimicrobial extrusion (MATE) (TC 2.A.66.1) family.

The protein localises to the membrane. This chain is Protein DETOXIFICATION 38, found in Arabidopsis thaliana (Mouse-ear cress).